The sequence spans 229 residues: Germin-like protein 12-2 (229 aa).

The signal sequence occupies residues 1–22; that stretch reads MASSNFFLLTALIALVATQAMA. A disulfide bridge links C32 with C47. One can recognise a Cupin type-1 domain in the interval 62–217; the sequence is ANLDKPMDTT…AFQVDKKAVD (156 aa). A glycan (N-linked (GlcNAc...) asparagine) is linked at N78. Residues H111, H113, E118, and H162 each contribute to the Mn(2+) site.

This sequence belongs to the germin family. As to quaternary structure, oligomer (believed to be a pentamer but probably hexamer).

The protein resides in the secreted. It is found in the extracellular space. It localises to the apoplast. In terms of biological role, may play a role in plant defense. Probably has no oxalate oxidase activity even if the active site is conserved. In Oryza sativa subsp. japonica (Rice), this protein is Germin-like protein 12-2.